Consider the following 440-residue polypeptide: MTATWEKKEGNQGVLSVTVPAKKVDQAIDQAFKKVVKQVNIPGFRKGKVPRQIFEQRFGVEALYQDAVDILLPEAYGEAIEETGIKPVDQPEIEVNQIEKGKDLKFDATVTVQPEVKLGEYKGLEIEKQNADLTDEELQEAIDHSLGHLAEMVIKEDGSVEEGDTVNIDFDGYVDGEQFEGGQAESYDLEIGSGMFIPGFEEQLVGLKTGDEKDVKVTFPEEYHAEELAGKEATFKVKINEIKYKNVPELDDEIANELDSDADNVEEYKENLRKRLSEEKKVNAENVEKEEAINKAVNNAEVDIPEAMINNELDRMMQEFAQRIQQSGLNLETYFQISGQDESQLREQMKDDAEERVKTNLTLNAIANAEEVEATEEDIDKELEAMSTQFNISVEDIKKTLGSTDIVKDDVRVKKVIDLLLDDAKLVEPSEDAEEESEDK.

The 86-residue stretch at 163-248 (GDTVNIDFDG…INEIKYKNVP (86 aa)) folds into the PPIase FKBP-type domain.

This sequence belongs to the FKBP-type PPIase family. Tig subfamily.

The protein resides in the cytoplasm. The enzyme catalyses [protein]-peptidylproline (omega=180) = [protein]-peptidylproline (omega=0). Its function is as follows. Involved in protein export. Acts as a chaperone by maintaining the newly synthesized protein in an open conformation. Functions as a peptidyl-prolyl cis-trans isomerase. The polypeptide is Trigger factor (Staphylococcus carnosus (strain TM300)).